A 359-amino-acid chain; its full sequence is 3-dehydroquinate synthase (359 aa).

Residues 70–75, 105–109, 129–130, Lys-142, Lys-151, and 169–172 each bind NAD(+); these read DGEQYK, GVIGD, TT, and FYKT. Glu-184, His-247, and His-264 together coordinate Zn(2+).

This sequence belongs to the sugar phosphate cyclases superfamily. Dehydroquinate synthase family. Co(2+) is required as a cofactor. Requires Zn(2+) as cofactor. The cofactor is NAD(+).

It localises to the cytoplasm. The catalysed reaction is 7-phospho-2-dehydro-3-deoxy-D-arabino-heptonate = 3-dehydroquinate + phosphate. It functions in the pathway metabolic intermediate biosynthesis; chorismate biosynthesis; chorismate from D-erythrose 4-phosphate and phosphoenolpyruvate: step 2/7. Its function is as follows. Catalyzes the conversion of 3-deoxy-D-arabino-heptulosonate 7-phosphate (DAHP) to dehydroquinate (DHQ). The sequence is that of 3-dehydroquinate synthase from Francisella tularensis subsp. tularensis (strain FSC 198).